The chain runs to 276 residues: uncharacterized protein (276 aa).

Residues 1 to 70 (MSKAKSPIKS…SDDDEEDSPN (70 aa)) form a disordered region. The segment covering 21 to 35 (VLREKKVKDAEKAEH) has biased composition (basic and acidic residues). An RRM domain is found at 105 to 183 (GVLYVGRLPH…KLLQCKVIPE (79 aa)). The disordered stretch occupies residues 249 to 276 (VSHPKAASPVASKKSSKKKNKKVLAAHK). Over residues 252 to 261 (PKAASPVASK) the composition is skewed to low complexity. A compositionally biased stretch (basic residues) spans 262–276 (KSSKKKNKKVLAAHK).

The protein localises to the nucleus. It is found in the nucleolus. This is an uncharacterized protein from Schizosaccharomyces pombe (strain 972 / ATCC 24843) (Fission yeast).